The following is a 330-amino-acid chain: Induced myeloid leukemia cell differentiation protein Mcl-1 homolog (330 aa).

The tract at residues 85-155 (LAVPPEEMAA…PPEEEDDELY (71 aa)) is PEST-like. Phosphoserine is present on S101. K116 is covalently cross-linked (Glycyl lysine isopeptide (Lys-Gly) (interchain with G-Cter in ubiquitin)). The segment at 129 to 153 (EAAKSSGADGSLPSTPPPPEEEDDE) is disordered. S139 carries the post-translational modification Phosphoserine; by GSK3-alpha and GSK3-beta. A Phosphoserine modification is found at S142. T143 is subject to Phosphothreonine; by MAPK. Residues K174 and K177 each participate in a glycyl lysine isopeptide (Lys-Gly) (interchain with G-Cter in ubiquitin) cross-link. Residues 189-203 (ALETLRRVGDGVQRN) carry the BH3 motif. The short motif at 232 to 252 (HVFKDGVTNWGRIVTLISFGA) is the BH1 element. The short motif at 284–299 (DWLVKQRGWDGFVEFF) is the BH2 element. A helical transmembrane segment spans residues 307 to 329 (GIRNVLLAFAGVAGVGAGLAYLI).

It belongs to the Bcl-2 family. As to quaternary structure, interacts with HIF3A (via C-terminus domain). Interacts with BOK, BIK, BAX, BAK1, and TPT1. Interacts with unphosphorylated BAD. Interacts with BMF, BBC3 and PMAIP1. Interacts with BOP. Interacts with BCL2L11; may sequester BCL2L11 to prevent its pro-apoptotic activity. Interacts with GIMAP5 and HSPA8/HSC70; the interaction between HSPA8 and MCL1 is impaired in the absence of GIMAP5. In terms of processing, cleaved by CASP3 during apoptosis, yielding a pro-apoptotic C-terminal fragment. Rapidly degraded in the absence of phosphorylation in the PEST region. Post-translationally, phosphorylated on Ser-139, by GSK3, in response to IL3/interleukin-3 withdrawal. Phosphorylation at Ser-139 induces ubiquitination and proteasomal degradation, abrogating the anti-apoptotic activity. Treatment with taxol or okadaic acid induces phosphorylation on additional sites. In terms of processing, ubiquitinated. Ubiquitination is induced by phosphorylation at Ser-139. Deubiquitinated by USP20; leading to increased stability. In terms of tissue distribution, ubiquitous. Highly expressed in heart, spleen, lung, liver, skeletal muscle and kidney. Detected at lower levels in brain, ovary, oviduct and testis.

It localises to the membrane. The protein resides in the cytoplasm. Its subcellular location is the mitochondrion. It is found in the nucleus. The protein localises to the nucleoplasm. Functionally, involved in the regulation of apoptosis versus cell survival, and in the maintenance of viability but not of proliferation. Mediates its effects by interactions with a number of other regulators of apoptosis. The sequence is that of Induced myeloid leukemia cell differentiation protein Mcl-1 homolog (Mcl1) from Rattus norvegicus (Rat).